The sequence spans 93 residues: Large ribosomal subunit protein bL31B (93 aa).

The protein belongs to the bacterial ribosomal protein bL31 family. Type B subfamily. In terms of assembly, part of the 50S ribosomal subunit.

This Psychrobacter arcticus (strain DSM 17307 / VKM B-2377 / 273-4) protein is Large ribosomal subunit protein bL31B.